Reading from the N-terminus, the 30-residue chain is Bacteriocin SRCAM 37 (30 aa).

It belongs to the bacteriocin class IIA/YGNGV family.

It is found in the secreted. In terms of biological role, bacteriocin with antibacterial activity against C.jejuni. This is Bacteriocin SRCAM 37 from Paenibacillus polymyxa (Bacillus polymyxa).